The sequence spans 434 residues: tRNA modification GTPase MnmE (434 aa).

Arg-20, Glu-79, and Val-119 together coordinate (6S)-5-formyl-5,6,7,8-tetrahydrofolate. The 143-residue stretch at 219 to 361 folds into the TrmE-type G domain; the sequence is GLRVVLAGRP…LQEKLVEIGK (143 aa). GTP-binding positions include 229–234, 248–254, and 273–276; these read NAGKST, APIAGTT, and DTAG. Positions 233 and 254 each coordinate Mg(2+). Lys-434 provides a ligand contact to (6S)-5-formyl-5,6,7,8-tetrahydrofolate.

Belongs to the TRAFAC class TrmE-Era-EngA-EngB-Septin-like GTPase superfamily. TrmE GTPase family. As to quaternary structure, homodimer. Heterotetramer of two MnmE and two MnmG subunits. K(+) is required as a cofactor.

It is found in the cytoplasm. Exhibits a very high intrinsic GTPase hydrolysis rate. Involved in the addition of a carboxymethylaminomethyl (cmnm) group at the wobble position (U34) of certain tRNAs, forming tRNA-cmnm(5)s(2)U34. This chain is tRNA modification GTPase MnmE, found in Zymomonas mobilis subsp. mobilis (strain ATCC 31821 / ZM4 / CP4).